Reading from the N-terminus, the 409-residue chain is NADH-quinone oxidoreductase subunit D (409 aa).

Belongs to the complex I 49 kDa subunit family. NDH-1 is composed of 14 different subunits. Subunits NuoB, C, D, E, F, and G constitute the peripheral sector of the complex.

It is found in the cell inner membrane. The catalysed reaction is a quinone + NADH + 5 H(+)(in) = a quinol + NAD(+) + 4 H(+)(out). Its function is as follows. NDH-1 shuttles electrons from NADH, via FMN and iron-sulfur (Fe-S) centers, to quinones in the respiratory chain. The immediate electron acceptor for the enzyme in this species is believed to be ubiquinone. Couples the redox reaction to proton translocation (for every two electrons transferred, four hydrogen ions are translocated across the cytoplasmic membrane), and thus conserves the redox energy in a proton gradient. This is NADH-quinone oxidoreductase subunit D from Helicobacter pylori (strain P12).